The sequence spans 214 residues: Large ribosomal subunit protein uL16-like (214 aa).

The protein belongs to the universal ribosomal protein uL16 family. In terms of assembly, component of the 60S large ribosomal subunit (LSU).

Its subcellular location is the cytoplasm. In terms of biological role, testis-specific component of the ribosome, which is required for the transition from prophase to metaphase in male meiosis I. Compensates for the inactivated X-linked RPL10 paralog during spermatogenesis. The ribosome is a large ribonucleoprotein complex responsible for the synthesis of proteins in the cell. The small ribosomal subunit (SSU) binds messenger RNAs (mRNAs) and translates the encoded message by selecting cognate aminoacyl-transfer RNA (tRNA) molecules. The large subunit (LSU) contains the ribosomal catalytic site termed the peptidyl transferase center (PTC), which catalyzes the formation of peptide bonds, thereby polymerizing the amino acids delivered by tRNAs into a polypeptide chain. The nascent polypeptides leave the ribosome through a tunnel in the LSU and interact with protein factors that function in enzymatic processing, targeting, and the membrane insertion of nascent chains at the exit of the ribosomal tunnel. The sequence is that of Large ribosomal subunit protein uL16-like (RPL10L) from Macaca fascicularis (Crab-eating macaque).